The sequence spans 342 residues: Nicotinate-nucleotide--dimethylbenzimidazole phosphoribosyltransferase (342 aa).

The active-site Proton acceptor is the Glu311.

The protein belongs to the CobT family.

The catalysed reaction is 5,6-dimethylbenzimidazole + nicotinate beta-D-ribonucleotide = alpha-ribazole 5'-phosphate + nicotinate + H(+). It functions in the pathway nucleoside biosynthesis; alpha-ribazole biosynthesis; alpha-ribazole from 5,6-dimethylbenzimidazole: step 1/2. In terms of biological role, catalyzes the synthesis of alpha-ribazole-5'-phosphate from nicotinate mononucleotide (NAMN) and 5,6-dimethylbenzimidazole (DMB). The polypeptide is Nicotinate-nucleotide--dimethylbenzimidazole phosphoribosyltransferase (Shewanella piezotolerans (strain WP3 / JCM 13877)).